The following is a 673-amino-acid chain: Annexin A6 (673 aa).

Position 2 is an N-acetylalanine (A2). Residue S13 is modified to Phosphoserine. Annexin repeat units follow at residues 20-91, 92-163, 175-247, 251-322, 363-434, 435-506, 521-595, and 599-670; these read FNPS…GLMR, PPAY…VLLQ, DLVQ…AVVK, STAE…KLCG, FNPD…GLMM, PPAH…SLAT, EDAQ…AIVQ, and NKPL…AICG. Y30 carries the phosphotyrosine modification. 4 positions are modified to N6-acetyllysine: K63, K68, K75, and K81. Phosphotyrosine is present on Y201. Residues K306, K370, and K418 each carry the N6-acetyllysine modification. S422 is subject to Phosphoserine. K483 carries the N6-acetyllysine modification. Phosphoserine is present on S537. Position 620 is an N6-acetyllysine (K620).

It belongs to the annexin family. Post-translationally, phosphorylated in response to growth factor stimulation.

It is found in the cytoplasm. It localises to the melanosome. May associate with CD21. May regulate the release of Ca(2+) from intracellular stores. This is Annexin A6 (ANXA6) from Bos taurus (Bovine).